A 105-amino-acid polypeptide reads, in one-letter code: Large ribosomal subunit protein bL21 (105 aa).

This sequence belongs to the bacterial ribosomal protein bL21 family. As to quaternary structure, part of the 50S ribosomal subunit. Contacts protein L20.

Functionally, this protein binds to 23S rRNA in the presence of protein L20. The sequence is that of Large ribosomal subunit protein bL21 from Rhizobium rhizogenes (strain K84 / ATCC BAA-868) (Agrobacterium radiobacter).